Here is a 146-residue protein sequence, read N- to C-terminus: Large ribosomal subunit protein eL28 (146 aa).

Residues 123 to 146 (VRAARKERSSKITFQRKAVRPKRH) form a disordered region.

Belongs to the eukaryotic ribosomal protein eL28 family.

In Trypanosoma cruzi, this protein is Large ribosomal subunit protein eL28.